Reading from the N-terminus, the 31-residue chain is Photosystem II reaction center protein T (31 aa).

A helical membrane pass occupies residues 3–23; the sequence is SAAYILVLALALGVIFFAIAF.

It belongs to the PsbT family. PSII is composed of 1 copy each of membrane proteins PsbA, PsbB, PsbC, PsbD, PsbE, PsbF, PsbH, PsbI, PsbJ, PsbK, PsbL, PsbM, PsbT, PsbX, PsbY, PsbZ, Psb30/Ycf12, peripheral proteins PsbO, CyanoQ (PsbQ), PsbU, PsbV and a large number of cofactors. It forms dimeric complexes.

The protein resides in the cellular thylakoid membrane. In terms of biological role, found at the monomer-monomer interface of the photosystem II (PS II) dimer, plays a role in assembly and dimerization of PSII. PSII is a light-driven water plastoquinone oxidoreductase, using light energy to abstract electrons from H(2)O, generating a proton gradient subsequently used for ATP formation. This chain is Photosystem II reaction center protein T, found in Trichodesmium erythraeum (strain IMS101).